The following is a 947-amino-acid chain: Bifunctional glutamine synthetase adenylyltransferase/adenylyl-removing enzyme (947 aa).

An adenylyl removase region spans residues 1–440 (MTPLSSPLSQ…VFNELIGDDE (440 aa)). The adenylyl transferase stretch occupies residues 450–947 (SEPWREVWQD…ASWRKWLVAV (498 aa)).

It belongs to the GlnE family. Mg(2+) is required as a cofactor.

The catalysed reaction is [glutamine synthetase]-O(4)-(5'-adenylyl)-L-tyrosine + phosphate = [glutamine synthetase]-L-tyrosine + ADP. It carries out the reaction [glutamine synthetase]-L-tyrosine + ATP = [glutamine synthetase]-O(4)-(5'-adenylyl)-L-tyrosine + diphosphate. Functionally, involved in the regulation of glutamine synthetase GlnA, a key enzyme in the process to assimilate ammonia. When cellular nitrogen levels are high, the C-terminal adenylyl transferase (AT) inactivates GlnA by covalent transfer of an adenylyl group from ATP to specific tyrosine residue of GlnA, thus reducing its activity. Conversely, when nitrogen levels are low, the N-terminal adenylyl removase (AR) activates GlnA by removing the adenylyl group by phosphorolysis, increasing its activity. The regulatory region of GlnE binds the signal transduction protein PII (GlnB) which indicates the nitrogen status of the cell. This is Bifunctional glutamine synthetase adenylyltransferase/adenylyl-removing enzyme from Salmonella typhimurium (strain LT2 / SGSC1412 / ATCC 700720).